The chain runs to 236 residues: Phosphoribosylaminoimidazole-succinocarboxamide synthase (236 aa).

Belongs to the SAICAR synthetase family.

It catalyses the reaction 5-amino-1-(5-phospho-D-ribosyl)imidazole-4-carboxylate + L-aspartate + ATP = (2S)-2-[5-amino-1-(5-phospho-beta-D-ribosyl)imidazole-4-carboxamido]succinate + ADP + phosphate + 2 H(+). It participates in purine metabolism; IMP biosynthesis via de novo pathway; 5-amino-1-(5-phospho-D-ribosyl)imidazole-4-carboxamide from 5-amino-1-(5-phospho-D-ribosyl)imidazole-4-carboxylate: step 1/2. This chain is Phosphoribosylaminoimidazole-succinocarboxamide synthase, found in Streptococcus equi subsp. zooepidemicus (strain MGCS10565).